Reading from the N-terminus, the 144-residue chain is Cysteine-rich tail protein 1 (144 aa).

Residues 51–105 are disordered; the sequence is APEPTHLLQPTEVPGPKGAKGNQGAAPIQNQQAWQQPGNPYSSSQRQAGLTYAGP. A compositionally biased stretch (polar residues) spans 78–98; it reads IQNQQAWQQPGNPYSSSQRQA.

Belongs to the CYSRT1 family. As to quaternary structure, interacts with LCE1B; the interaction is direct. Interacts with LCE2C; the interaction is direct. Interacts with LCE3A; the interaction is direct. Interacts with LCE3C; the interaction is direct. Interacts with LCE4A; the interaction is direct. Interacts with LCE5A; the interaction is direct. Interacts with LCE1C. Interacts with LCE1D. Interacts with LCE1E. Interacts with LCE2A. Interacts with LCE3D. Interacts with LCE3E. Interacts with LCE1A. In terms of tissue distribution, expressed in the stratum granulosum, in skin and oral epithelia (at protein level).

It localises to the cornified envelope. Component of the stratum corneum that may contribute to epidermal antimicrobial host defenses. This is Cysteine-rich tail protein 1 (CYSRT1) from Homo sapiens (Human).